We begin with the raw amino-acid sequence, 335 residues long: Serpentine receptor class alpha-13 (335 aa).

Topologically, residues 1–22 (MAIVSSENRTCADEKLLALYQS) are extracellular. Residues 23 to 43 (WSYIASIVFNCLVPTISTYFL) form a helical membrane-spanning segment. Residues 44–61 (GRAIFQLCNQATIQYSTR) are Cytoplasmic-facing. The chain crosses the membrane as a helical span at residues 62 to 82 (ILLIATILFAACHQVSYFAFK). At 83–107 (IDLLHTMFFKLDQPCFLQRSSYDCR) the chain is on the extracellular side. Residues 108 to 128 (FISIAQTTGVVGMALTGLAMS) form a helical membrane-spanning segment. Residues 129 to 149 (TDRALALTFPADYHKLKSVPR) are Cytoplasmic-facing. The helical transmembrane segment at 150–170 (VVLSVFVFIVSFSTWFLLTMN) threads the bilayer. At 171-192 (DPLTGYLNHCGFYPSYSVANFQ) the chain is on the extracellular side. Residues 193-213 (LMLDVILYLAIFNLIWDVILF) form a helical membrane-spanning segment. At 214–235 (YYARQQILWRRSYQFQKRYEAR) the chain is on the cytoplasmic side. A helical transmembrane segment spans residues 236–255 (ISLNCTQAVFVISICQCISN). Over 256–278 (GANSGLMRLLMMIGTSITSVTYS) the chain is Extracellular. A helical membrane pass occupies residues 279-299 (SLLSLFYTAPYSCILLPILMM). The Cytoplasmic portion of the chain corresponds to 300–335 (RISEYIREQRTIGILSLRSEKPGLEEHHQRMRAAWS).

This sequence belongs to the nematode receptor-like protein sra family.

The protein resides in the membrane. Its function is as follows. Chemosensory receptor that negatively regulates RAS/MAPK signaling during vulva induction and the negative regulation of olfaction of volitile attractants. Required for the suppression of vulval induction in response to food starvation. Signaling acts through the GPA-5 G-alpha protein subunit. The polypeptide is Serpentine receptor class alpha-13 (Caenorhabditis briggsae).